A 1014-amino-acid chain; its full sequence is Calcium-transporting ATPase 2, plasma membrane-type (1014 aa).

An N-acetylmethionine modification is found at Met1. The Cytoplasmic portion of the chain corresponds to 1-160 (MESYLNENFD…NKFAESEMRG (160 aa)). The interaction with calmodulin stretch occupies residues 20-31 (VLEKWRNLCGVV). The residue at position 45 (Ser45) is a Phosphoserine; by CPK1. Residues 161 to 181 (FWVFVWEALQDMTLMILGVCA) traverse the membrane as a helical segment. At 182–199 (FVSLIVGIATEGWPKGSH) the chain is on the lumenal side. The chain crosses the membrane as a helical span at residues 200–220 (DGLGIAASILLVVFVTATSDY). At 221–348 (RQSLQFRDLD…DDETPLQVKL (128 aa)) the chain is on the cytoplasmic side. Residues 349–368 (NGVATIIGKIGLFFAVVTFA) form a helical membrane-spanning segment. The Lumenal segment spans residues 369–398 (VLVQGMFMRKLSTGTHWVWSGDEALELLEY). Residues 399-416 (FAIAVTIVVVAVPEGLPL) form a helical membrane-spanning segment. The Cytoplasmic segment spans residues 417 to 810 (AVTLSLAFAM…KWGRSVYINI (394 aa)). Asp454 (4-aspartylphosphate intermediate) is an active-site residue. Residues Asp755 and Asp759 each coordinate Mg(2+). The helical transmembrane segment at 811–829 (QKFVQFQLTVNVVALVVNF) threads the bilayer. Over 830-840 (SSACLTGSAPL) the chain is Lumenal. A helical membrane pass occupies residues 841–861 (TAVQLLWVNMIMDTLGALALA). Over 862–881 (TEPPNDELMKRLPVGRRGNF) the chain is Cytoplasmic. A helical transmembrane segment spans residues 882-904 (ITNAMWRNILGQAVYQFIVIWIL). At 905-916 (QAKGKAMFGLDG) the chain is on the lumenal side. A helical membrane pass occupies residues 917–938 (PDSTLMLNTLIFNCFVFCQVFN). Residues 939–956 (EISSREMEEIDVFKGILD) are Cytoplasmic-facing. Residues 957–978 (NYVFVVVIGATVFFQIIIIEFL) traverse the membrane as a helical segment. Topologically, residues 979–988 (GTFASTTPLT) are lumenal. A helical transmembrane segment spans residues 989 to 1010 (ITQWIFSIFIGFLGMPIAAGLK). At 1011–1014 (TIPV) the chain is on the cytoplasmic side.

Belongs to the cation transport ATPase (P-type) (TC 3.A.3) family. Type IIB subfamily.

It is found in the endoplasmic reticulum membrane. The catalysed reaction is Ca(2+)(in) + ATP + H2O = Ca(2+)(out) + ADP + phosphate + H(+). Its activity is regulated as follows. Activated by calmodulin. Functionally, this magnesium-dependent enzyme catalyzes the hydrolysis of ATP coupled with the translocation of calcium from the cytosol into the endoplasmic reticulum. In Arabidopsis thaliana (Mouse-ear cress), this protein is Calcium-transporting ATPase 2, plasma membrane-type (ACA2).